The chain runs to 97 residues: MRVSALAFAAVLSLVSAKKINMHCNFAEDHTGMVQQPYCCRDLVPARGNSKANEALDCDQLDQPQLCDDQSRPACCYTIGAKKICTSHVIFQDAEDV.

The first 17 residues, 1 to 17 (MRVSALAFAAVLSLVSA), serve as a signal peptide directing secretion. 4 cysteine pairs are disulfide-bonded: Cys24-Cys75, Cys39-Cys67, Cys40-Cys58, and Cys76-Cys85.

The protein resides in the secreted. It localises to the cell wall. Functionally, aerial growth, conidiation, and dispersal of filamentous fungi in the environment rely upon a capability of their secreting small amphipathic proteins called hydrophobins (HPBs) with low sequence identity. Class I can self-assemble into an outermost layer of rodlet bundles on aerial cell surfaces, conferring cellular hydrophobicity that supports fungal growth, development and dispersal; whereas Class II form highly ordered films at water-air interfaces through intermolecular interactions but contribute nothing to the rodlet structure. In P.expansum, hydrophobins contribute to germination, tolerance to cold stress and mycotoxins patulin and citrinin production. HfbC, HfbD, HfbE, and HfbF have functional redundancy in fungal surface hydrophobicity. The sequence is that of Unclassified hydrophobin F from Penicillium expansum (Blue mold rot fungus).